Reading from the N-terminus, the 84-residue chain is Small ribosomal subunit protein bS20 (84 aa).

The protein belongs to the bacterial ribosomal protein bS20 family.

Functionally, binds directly to 16S ribosomal RNA. This is Small ribosomal subunit protein bS20 from Ligilactobacillus salivarius (strain UCC118) (Lactobacillus salivarius).